Reading from the N-terminus, the 399-residue chain is Mycinamicin VI 2''-O-methyltransferase (399 aa).

S-adenosyl-L-methionine-binding positions include Thr173, 202 to 208 (EIGVGGY), Ser217, Asp234, 252 to 253 (DQ), and Asp275. Asp275 is a binding site for Mg(2+). His278 serves as the catalytic Proton acceptor. 2 residues coordinate Mg(2+): Glu303 and Asp304.

The protein belongs to the methyltransferase OleY/MycE family. In terms of assembly, homotetramer. Requires Mg(2+) as cofactor.

The enzyme catalyses mycinamicin VI + S-adenosyl-L-methionine = mycinamicin III + S-adenosyl-L-homocysteine + H(+). It functions in the pathway antibiotic biosynthesis; mycinamicin biosynthesis. Its function is as follows. O-methyltransferase that catalyzes the conversion of mycinamicin VI to mycinamicin III in the biosynthesis of mycinamicin, a 16-membered macrolide antibiotic. This chain is Mycinamicin VI 2''-O-methyltransferase (mycE), found in Micromonospora griseorubida.